The primary structure comprises 339 residues: Phenylalanine--tRNA ligase alpha subunit (339 aa).

Glutamate 250 is a Mg(2+) binding site.

The protein belongs to the class-II aminoacyl-tRNA synthetase family. Phe-tRNA synthetase alpha subunit type 1 subfamily. Tetramer of two alpha and two beta subunits. The cofactor is Mg(2+).

Its subcellular location is the cytoplasm. The enzyme catalyses tRNA(Phe) + L-phenylalanine + ATP = L-phenylalanyl-tRNA(Phe) + AMP + diphosphate + H(+). This Bacteroides fragilis (strain ATCC 25285 / DSM 2151 / CCUG 4856 / JCM 11019 / LMG 10263 / NCTC 9343 / Onslow / VPI 2553 / EN-2) protein is Phenylalanine--tRNA ligase alpha subunit.